The following is a 534-amino-acid chain: (E)-beta-farnesene synthase (534 aa).

The Mg(2+) site is built by Asp-287, Asp-291, Asn-431, Ser-435, and Glu-439. A DDXXD motif motif is present at residues Asp-287–Asp-291.

This sequence belongs to the terpene synthase family. The cofactor is Mg(2+). It depends on Co(2+) as a cofactor. Requires Mn(2+) as cofactor.

It is found in the cytoplasm. The enzyme catalyses (2E,6E)-farnesyl diphosphate = (E)-beta-farnesene + diphosphate. It participates in secondary metabolite biosynthesis; terpenoid biosynthesis. Its function is as follows. Sesquiterpene cyclase catalyzing the production of beta-farnesene and alpha-bergamotene in equal amounts from farnesyl diphosphate. Involved in indirect defense by producing volatile signals attracting natural enemies of herbivores. The chain is (E)-beta-farnesene synthase from Zea mays subsp. mexicana (Mexican teosinte).